A 287-amino-acid polypeptide reads, in one-letter code: Ribosomal RNA small subunit methyltransferase A (287 aa).

Residues asparagine 18, leucine 20, glycine 45, glutamate 66, aspartate 91, and asparagine 118 each contribute to the S-adenosyl-L-methionine site.

Belongs to the class I-like SAM-binding methyltransferase superfamily. rRNA adenine N(6)-methyltransferase family. RsmA subfamily.

It is found in the cytoplasm. It catalyses the reaction adenosine(1518)/adenosine(1519) in 16S rRNA + 4 S-adenosyl-L-methionine = N(6)-dimethyladenosine(1518)/N(6)-dimethyladenosine(1519) in 16S rRNA + 4 S-adenosyl-L-homocysteine + 4 H(+). Its function is as follows. Specifically dimethylates two adjacent adenosines (A1518 and A1519) in the loop of a conserved hairpin near the 3'-end of 16S rRNA in the 30S particle. May play a critical role in biogenesis of 30S subunits. The sequence is that of Ribosomal RNA small subunit methyltransferase A from Haemophilus influenzae (strain ATCC 51907 / DSM 11121 / KW20 / Rd).